A 571-amino-acid polypeptide reads, in one-letter code: Protein tesmin/TSO1-like CXC 6 (571 aa).

Disordered regions lie at residues 1–52, 92–119, 293–325, 370–411, and 507–571; these read MGEG…AAAS, IRHPRPESPNSMPRPAGETRDGTPQKKK, NQGTKDSSTHRLGQANNGRTTSSQTGSRAGGNA, LANQ…RSLS, and NGVS…KKDL. Residues 7 to 16 are compositionally biased toward basic and acidic residues; the sequence is GDKFPPKTDE. The 125-residue stretch at 117–241 folds into the CRC domain; the sequence is KKKQCNCKHS…KCLDCKNFEG (125 aa). Polar residues-rich tracts occupy residues 293-319, 373-388, and 508-539; these read NQGTKDSSTHRLGQANNGRTTSSQTGS, QKETSVASSVQDQGHV, and GVSQTAKQPSQLNTTTPNTSSQTANGVSQTAK. Over residues 540 to 557 the composition is skewed to low complexity; sequence QPSQLTTTTTTPNTSSQT.

The protein belongs to the lin-54 family. In terms of tissue distribution, ubiquitous but expressed mostly in flowers.

The protein resides in the nucleus. Plays a role in development of both male and female reproductive tissues. This chain is Protein tesmin/TSO1-like CXC 6 (TCX6), found in Arabidopsis thaliana (Mouse-ear cress).